A 412-amino-acid polypeptide reads, in one-letter code: D-amino acid dehydrogenase 3 (412 aa).

Position 4–18 (4–18 (IVVIGAGIAGVSTAY)) interacts with FAD.

This sequence belongs to the DadA oxidoreductase family. FAD serves as cofactor.

It carries out the reaction a D-alpha-amino acid + A + H2O = a 2-oxocarboxylate + AH2 + NH4(+). Oxidative deamination of D-amino acids. The polypeptide is D-amino acid dehydrogenase 3 (dadA3) (Mesorhizobium japonicum (strain LMG 29417 / CECT 9101 / MAFF 303099) (Mesorhizobium loti (strain MAFF 303099))).